Here is a 448-residue protein sequence, read N- to C-terminus: Serine/threonine-protein phosphatase 2A regulatory subunit B'' subunit gamma (448 aa).

2 EF-hand domains span residues 268–303 (PSAL…TLTC) and 336–371 (KEPA…IQEQ). 5 residues coordinate Ca(2+): aspartate 281, aspartate 283, asparagine 285, methionine 287, and glutamate 292.

Its subcellular location is the nucleus. It localises to the cytoplasm. Functionally, possible role in the regulation of cell death. This chain is Serine/threonine-protein phosphatase 2A regulatory subunit B'' subunit gamma (ppp2r3c), found in Xenopus tropicalis (Western clawed frog).